A 185-amino-acid polypeptide reads, in one-letter code: Large ribosomal subunit protein uL5 (185 aa).

Belongs to the universal ribosomal protein uL5 family. Part of the 50S ribosomal subunit; part of the 5S rRNA/L5/L18/L25 subcomplex. Contacts the 5S rRNA and the P site tRNA. Forms a bridge to the 30S subunit in the 70S ribosome.

Functionally, this is one of the proteins that bind and probably mediate the attachment of the 5S RNA into the large ribosomal subunit, where it forms part of the central protuberance. In the 70S ribosome it contacts protein S13 of the 30S subunit (bridge B1b), connecting the 2 subunits; this bridge is implicated in subunit movement. Contacts the P site tRNA; the 5S rRNA and some of its associated proteins might help stabilize positioning of ribosome-bound tRNAs. This chain is Large ribosomal subunit protein uL5, found in Caulobacter vibrioides (strain NA1000 / CB15N) (Caulobacter crescentus).